Reading from the N-terminus, the 537-residue chain is MGCVQCKDKEATKLTDDRDASISQGAGYRYGADPTPQHYPSFGVTAIPNYNNFHAPVGQGVTVFGGVNTSSHTGTLRTRGGTGVTLFVALYDYEARTEDDLSFRKGERFQILNSTEGDWWDARSLTTGGSGYIPSNYVAPVDSIQAEDWYFGKLGRKDAERQLLSTGNPRGTYLIRESETTKGAFSLSIRDWDDEKGDHVKHYKIRKLDSGGYYITTRAQFDTLQQLVQHYSDRAAGLCCRLVVPCHKGMPRLADLSVKTKDVWEIPRESLQLIKRLGNGQFGEVWMGTWNGTTKVAVKTLKPGTMSPESFLEEAQIMKKLRHDKLVQLYAVVSEEPIYIVTEYMSKGSLLDFLKDGEGRALKLPNLVDMAAQVAAGMAYIERMNYIHRDLRSANILVGDNLVCKIADFGLARLIEDNEYTARQGAKFPIKWTAPEAALYGRFTIKSDVWSFGILLTELVTKGRVPYPGMNNREVLEQVERGYRMPCPQDCPASLHELMLQCWKKDPEERPTFEYLQAFLEDYFTATEPQYQPGDNL.

The N-myristoyl glycine moiety is linked to residue Gly2. Residues Cys3 and Cys6 are each lipidated (S-palmitoyl cysteine). Residue Thr12 is modified to Phosphothreonine; by PKC. The 62-residue stretch at 82-143 (TGVTLFVALY…PSNYVAPVDS (62 aa)) folds into the SH3 domain. The SH2 domain occupies 149-246 (WYFGKLGRKD…GLCCRLVVPC (98 aa)). The Protein kinase domain maps to 271-524 (LQLIKRLGNG…YLQAFLEDYF (254 aa)). ATP-binding positions include 277–285 (LGNGQFGEV) and Lys299. Catalysis depends on Asp390, which acts as the Proton acceptor. Residue Tyr420 is modified to Phosphotyrosine; by autocatalysis. Tyr531 carries the post-translational modification Phosphotyrosine.

The protein belongs to the protein kinase superfamily. Tyr protein kinase family. SRC subfamily. In terms of assembly, associates through its SH3 domain, to the p85 subunit of phosphatidylinositol 3-kinase. Requires Mn(2+) as cofactor.

It catalyses the reaction L-tyrosyl-[protein] + ATP = O-phospho-L-tyrosyl-[protein] + ADP + H(+). Inhibited by phosphorylation of Tyr-531 by leukocyte common antigen and activated by dephosphorylation of this site. Functionally, tyrosine-protein kinase implicated in the control of cell growth. Plays a role in the regulation of intracellular calcium levels. Required in brain development and mature brain function with important roles in the regulation of axon growth, axon guidance, and neurite extension. The chain is Tyrosine-protein kinase Fyn (fyn) from Xiphophorus hellerii (Green swordtail).